The primary structure comprises 100 residues: MFAIIETGGKQILVKEGDSIYVEKLEGQEKSEVKFDKVLAVNDVFGKPYVTGAVVHGTIEKQGKAKKIVVYRHNPKSTHKRKLGHRQPYTLVKITKIKGK.

It belongs to the bacterial ribosomal protein bL21 family. As to quaternary structure, part of the 50S ribosomal subunit. Contacts protein L20.

In terms of biological role, this protein binds to 23S rRNA in the presence of protein L20. This chain is Large ribosomal subunit protein bL21, found in Mycoplasmopsis synoviae (strain 53) (Mycoplasma synoviae).